A 2009-amino-acid chain; its full sequence is Sodium channel protein type 1 subunit alpha (2009 aa).

The Cytoplasmic segment spans residues 1 to 128 (MEQTVLVPPG…KIAIKILVHS (128 aa)). Basic and acidic residues predominate over residues 28–48 (RIAEEKAKNPKPDKKDDDENG). Residues 28–60 (RIAEEKAKNPKPDKKDDDENGPKPNSDLEAGKN) are disordered. One copy of the I repeat lies at 110–454 (ILTPFNPLRK…QQMIEQLKKQ (345 aa)). The chain crosses the membrane as a helical span at residues 129–146 (LFSMLIMCTILTNCVFMT). Topologically, residues 147 to 152 (MSNPPD) are extracellular. A helical transmembrane segment spans residues 153–177 (WTKNVEYTFTGIYTFESLIKIIARG). Over 178–188 (FCLEDFTFLRD) the chain is Cytoplasmic. Residues 189-205 (PWNWLDFTVITFAYVTE) traverse the membrane as a helical segment. The Extracellular segment spans residues 206–213 (FVDLGNVS). An N-linked (GlcNAc...) asparagine glycan is attached at N211. A helical transmembrane segment spans residues 214-235 (ALRTFRVLRALKTISVIPGLKT). At 236-245 (IVGALIQSVK) the chain is on the cytoplasmic side. A helical membrane pass occupies residues 246–269 (KLSDVMILTVFCLSVFALIGLQLF). Over 270 to 369 (MGNLRNKCIQ…YGYTSFDTFS (100 aa)) the chain is Extracellular. Intrachain disulfides connect C277–C345 and C336–C351. N-linked (GlcNAc...) asparagine glycans are attached at residues N284, N295, N301, N306, and N338. The pore-forming intramembrane region spans 370 to 384 (WAFLSLFRLMTQDFW). Over 385–397 (ENLYQLTLRAAGK) the chain is Extracellular. The helical transmembrane segment at 398 to 423 (TYMIFFVLVIFLGSFYLINLILAVVA) threads the bilayer. Residues 424-768 (MAYEEQNQAT…HVVNLVVMDP (345 aa)) lie on the Cytoplasmic side of the membrane. The interval 455–529 (QEAAQQAATA…FQKSESEDSI (75 aa)) is disordered. The segment covering 456–466 (EAAQQAATATA) has biased composition (low complexity). The residue at position 470 (S470) is a Phosphoserine. Residues 479 to 492 (LSDSSSEASKLSSK) show a composition bias toward low complexity. The span at 495-506 (KERRNRRKKRKQ) shows a compositional bias: basic residues. Residues 520-529 (FQKSESEDSI) are compositionally biased toward basic and acidic residues. S523, S525, S550, S551, S607, and S730 each carry phosphoserine. Residues 584-627 (VGSENDFADDEHSTFEDNESRRDSLFVPRRHGERRNSNLSQTSR) are disordered. A compositionally biased stretch (basic and acidic residues) spans 593–607 (DEHSTFEDNESRRDS). The stretch at 750–1022 (CSPYWLKVKH…QIAVDRMHKG (273 aa)) is one II repeat. A helical membrane pass occupies residues 769–787 (FVDLAITICIVLNTLFMAM). Residues 788 to 797 (EHYPMTDHFN) are Extracellular-facing. The helical transmembrane segment at 798–820 (NVLTVGNLVFTGIFTAEMFLKII) threads the bilayer. The Cytoplasmic segment spans residues 821-830 (AMDPYYYFQE). The helical transmembrane segment at 831 to 849 (GWNIFDGFIVTLSLVELGL) threads the bilayer. Residues 850–854 (ANVEG) lie on the Extracellular side of the membrane. The chain crosses the membrane as a helical span at residues 855–874 (LSVLRSFRLLRVFKLAKSWP). The Cytoplasmic portion of the chain corresponds to 875 to 891 (TLNMLIKIIGNSVGALG). A helical membrane pass occupies residues 892–912 (NLTLVLAIIVFIFAVVGMQLF). Residues 913–938 (GKSYKDCVCKIASDCQLPRWHMNDFF) are Extracellular-facing. A disulfide bond links C921 and C927. The pore-forming intramembrane region spans 939–952 (HSFLIVFRVLCGEW). Topologically, residues 953–965 (IETMWDCMEVAGQ) are extracellular. A disulfide bridge connects residues C959 and C968. The chain crosses the membrane as a helical span at residues 966–992 (AMCLTVFMMVMVIGNLVVLNLFLALLL). Residues 993–1218 (SSFSADNLAA…RTCFRIVEHN (226 aa)) lie on the Cytoplasmic side of the membrane. Positions 1129–1163 (TEDFSSESDLEESKEKLNESSSSSEGSTVDIGAPV) are disordered. Residues 1200 to 1514 (RGKQWWNLRR…KKYYNAMKKL (315 aa)) form an III repeat. A helical transmembrane segment spans residues 1219–1237 (WFETFIVFMILLSSGALAF). Over 1238-1250 (EDIYIDQRKTIKT) the chain is Extracellular. A helical transmembrane segment spans residues 1251–1276 (MLEYADKVFTYIFILEMLLKWVAYGY). The Cytoplasmic portion of the chain corresponds to 1277 to 1278 (QT). A helical transmembrane segment spans residues 1279–1304 (YFTNAWCWLDFLIVDVSLVSLTANAL). Residues 1305–1313 (GYSELGAIK) are Extracellular-facing. A helical transmembrane segment spans residues 1314 to 1332 (SLRTLRALRPLRALSRFEG). Residues 1333–1345 (MRVVVNALLGAIP) lie on the Cytoplasmic side of the membrane. A helical membrane pass occupies residues 1346–1369 (SIMNVLLVCLIFWLIFSIMGVNLF). The Extracellular segment spans residues 1370-1415 (AGKFYHCINTTTGDRFDIEDVNNHTDCLKLIERNETARWKNVKVNF). The cysteines at positions 1376 and 1396 are disulfide-linked. 3 N-linked (GlcNAc...) asparagine glycosylation sites follow: N1378, N1392, and N1403. An intramembrane region (pore-forming) is located at residues 1416 to 1433 (DNVGFGYLSLLQVATFKG). The Extracellular portion of the chain corresponds to 1434-1457 (WMDIMYAAVDSRNVELQPKYEESL). A helical transmembrane segment spans residues 1458-1483 (YMYLYFVIFIIFGSFFTLNLFIGVII). Residues 1484–1541 (DNFNQQKKKFGGQDIFMTEEQKKYYNAMKKLGSKKPQKPIPRPGNKFQGMVFDFVTRQ) lie on the Cytoplasmic side of the membrane. The residue at position 1516 (S1516) is a Phosphoserine; by PKC. The IV repeat unit spans residues 1523–1821 (IPRPGNKFQG…WEKFDPDATQ (299 aa)). Residues 1542 to 1560 (VFDISIMILICLNMVTMMV) form a helical membrane-spanning segment. At 1561–1571 (ETDDQSEYVTT) the chain is on the extracellular side. Residues 1561 to 1571 (ETDDQSEYVTT) are S1-S2 loop of repeat IV. A helical transmembrane segment spans residues 1572 to 1593 (ILSRINLVFIVLFTGECVLKLI). The Cytoplasmic segment spans residues 1594–1601 (SLRHYYFT). A helical membrane pass occupies residues 1602-1623 (IGWNIFDFVVVILSIVGMFLAE). An S3b-S4 loop of repeat IV region spans residues 1619-1636 (MFLAELIEKYFVSPTLFR). The Extracellular portion of the chain corresponds to 1624–1636 (LIEKYFVSPTLFR). Residues 1637–1655 (VIRLARIGRILRLIKGAKG) traverse the membrane as a helical segment. Over 1656-1665 (IRTLLFALMM) the chain is Cytoplasmic. The helical transmembrane segment at 1666–1688 (SLPALFNIGLLLFLVMFIYAIFG) threads the bilayer. At 1689 to 1711 (MSNFAYVKREVGIDDMFNFETFG) the chain is on the extracellular side. Positions 1712 to 1726 (NSMICLFQITTSAGW) form an intramembrane region, pore-forming. At 1727–1759 (DGLLAPILNSKPPDCDPNKVNPGSSVKGDCGNP) the chain is on the extracellular side. The cysteines at positions 1741 and 1756 are disulfide-linked. A helical membrane pass occupies residues 1760 to 1788 (SVGIFFFVSYIIISFLVVVNMYIAVILEN). Residues 1789–2009 (FSVATEESAE…EGKDEKAKGK (221 aa)) are Cytoplasmic-facing. Positions 1915–1944 (EEVSAVIIQRAYRRHLLKRTVKQASFTYNK) constitute an IQ domain. The tract at residues 1986–2009 (YDRVTKPIVEKHEQEGKDEKAKGK) is disordered. A compositionally biased stretch (basic and acidic residues) spans 1988–2009 (RVTKPIVEKHEQEGKDEKAKGK).

The protein belongs to the sodium channel (TC 1.A.1.10) family. Nav1.1/SCN1A subfamily. In terms of assembly, the Nav1.1 voltage-gated sodium channel consists of an ion-conducting alpha subunit SCN1A which is functional on its own regulated by one or more beta-1 (SCN1B), beta-2 (SCN2B), beta-3 (SCN3B) and beta-4 (SCN4B) subunits. SCN1B and SCN3B are non-covalently associated with SCN1A. SCN2B and SCN4B are disulfide-linked to SCN1A. SCN1B regulates both the expression at the plasma membrane and the voltage dependence of Nav1.1 inactivation. SCN3B and SCN4B reduce Nav1.1 conductance. Probably interacts with TMEM233; modulates the gating properties of NaV1.1. Interacts with FGF13; regulates the steady-state inactivation of Nav.1.1. Post-translationally, phosphorylation at Ser-1516 by PKC in a highly conserved cytoplasmic loop slows inactivation of the sodium channel and reduces peak sodium currents.

The protein localises to the cell membrane. The catalysed reaction is Na(+)(in) = Na(+)(out). Activated by the spider toxins Hm1a and Hm1b (H.maculata, AC P60992 and AC P0DOC5) eliciting acute pain and mechanical allodynia. Inhibited by the conotoxin GVIIJ. Inhibited by the spider beta/delta-theraphotoxin-Pre1a. Pore-forming subunit of Nav1.1, a voltage-gated sodium (Nav) channel that directly mediates the depolarizing phase of action potentials in excitable membranes. Navs, also called VGSCs (voltage-gated sodium channels) or VDSCs (voltage-dependent sodium channels), operate by switching between closed and open conformations depending on the voltage difference across the membrane. In the open conformation they allow Na(+) ions to selectively pass through the pore, along their electrochemical gradient. The influx of Na(+) ions provokes membrane depolarization, initiating the propagation of electrical signals throughout cells and tissues. By regulating the excitability of neurons, ensures that they respond appropriately to synaptic inputs, maintaining the balance between excitation and inhibition in brain neural circuits. Nav1.1 plays a role in controlling the excitability and action potential propagation from somatosensory neurons, thereby contributing to the sensory perception of mechanically-induced pain. The sequence is that of Sodium channel protein type 1 subunit alpha from Homo sapiens (Human).